Consider the following 965-residue polypeptide: Probable serine/threonine-protein kinase DDB_G0291516 (965 aa).

A disordered region spans residues 114–170 (KDSQKELLPSPQQLTPPTSLPSLPLLPLPQAPEQNEEQQLTQPPSPPSIPPPPPQKK). 2 stretches are compositionally biased toward low complexity: residues 119–136 (ELLP…LPSL) and 144–155 (APEQNEEQQLTQ). A compositionally biased stretch (pro residues) spans 156–168 (PPSPPSIPPPPPQ). ANK repeat units lie at residues 271-301 (KGET…HMGI) and 310-339 (LNKN…PLKM). The Protein kinase domain maps to 459 to 739 (IDFHTQIGSA…NVKAIKKEFL (281 aa)). ATP-binding positions include 465–473 (IGSAGNASV) and K486. D587 (proton acceptor) is an active-site residue. The chain crosses the membrane as a helical span at residues 653–673 (IYSLGIILWELVCVAMTGTYI). Residues N760, N765, N905, N909, N910, N914, N934, and N938 are each glycosylated (N-linked (GlcNAc...) asparagine). Residues 881 to 940 (NINKNKNNNNNNNNNNNNNNNINNNNTFNNSTNNNSNDNINIPYDFNNNNNNNNNSCNNS) show a composition bias toward low complexity. Residues 881 to 942 (NINKNKNNNN…NNNSCNNSKK (62 aa)) are disordered.

Belongs to the protein kinase superfamily. Ser/Thr protein kinase family.

It localises to the membrane. The catalysed reaction is L-seryl-[protein] + ATP = O-phospho-L-seryl-[protein] + ADP + H(+). The enzyme catalyses L-threonyl-[protein] + ATP = O-phospho-L-threonyl-[protein] + ADP + H(+). The chain is Probable serine/threonine-protein kinase DDB_G0291516 from Dictyostelium discoideum (Social amoeba).